A 338-amino-acid polypeptide reads, in one-letter code: Tetraacyldisaccharide 4'-kinase (338 aa).

49–56 (TVGGTGKT) contacts ATP.

This sequence belongs to the LpxK family.

It carries out the reaction a lipid A disaccharide + ATP = a lipid IVA + ADP + H(+). The protein operates within glycolipid biosynthesis; lipid IV(A) biosynthesis; lipid IV(A) from (3R)-3-hydroxytetradecanoyl-[acyl-carrier-protein] and UDP-N-acetyl-alpha-D-glucosamine: step 6/6. In terms of biological role, transfers the gamma-phosphate of ATP to the 4'-position of a tetraacyldisaccharide 1-phosphate intermediate (termed DS-1-P) to form tetraacyldisaccharide 1,4'-bis-phosphate (lipid IVA). This Geobacter metallireducens (strain ATCC 53774 / DSM 7210 / GS-15) protein is Tetraacyldisaccharide 4'-kinase.